The following is a 266-amino-acid chain: Ras-like protein family member 12 (266 aa).

GTP contacts are provided by residues 27–34, 74–78, and 134–137; these read GRRGAGKS, DTADL, and NKLD.

This sequence belongs to the small GTPase superfamily. Ras family.

It catalyses the reaction GTP + H2O = GDP + phosphate + H(+). This Mus musculus (Mouse) protein is Ras-like protein family member 12 (Rasl12).